The chain runs to 224 residues: Glutathione S-transferase U4 (224 aa).

Positions 6 to 85 (EDVKLLGFWA…YIDQIWKNNP (80 aa)) constitute a GST N-terminal domain. Glutathione-binding positions include 16 to 17 (SP), 42 to 43 (NK), 56 to 57 (KV), and 69 to 70 (ES). The 128-residue stretch at 90-217 (DPYEKAMALF…EEQIEHMKKV (128 aa)) folds into the GST C-terminal domain. Residue threonine 151 is modified to Phosphothreonine.

Belongs to the GST superfamily. Tau family.

Its subcellular location is the cytoplasm. The protein localises to the cytosol. It carries out the reaction RX + glutathione = an S-substituted glutathione + a halide anion + H(+). May be involved in the conjugation of reduced glutathione to a wide number of exogenous and endogenous hydrophobic electrophiles and have a detoxification role against certain herbicides. This Arabidopsis thaliana (Mouse-ear cress) protein is Glutathione S-transferase U4 (GSTU4).